Reading from the N-terminus, the 75-residue chain is Protein BsdD (75 aa).

Functionally, involved in the non-oxidative decarboxylation and detoxification of phenolic derivatives under both aerobic and anaerobic conditions, however the precise biochemical function of BsdD in metabolism of phenolic acid is unknown. The polypeptide is Protein BsdD (Bacillus subtilis (strain 168)).